Consider the following 147-residue polypeptide: UPF0306 protein YhbP (147 aa).

The protein belongs to the UPF0306 family.

This chain is UPF0306 protein YhbP, found in Salmonella choleraesuis (strain SC-B67).